Here is a 197-residue protein sequence, read N- to C-terminus: Small ribosomal subunit protein uS2 (197 aa).

The protein belongs to the universal ribosomal protein uS2 family.

In Archaeoglobus fulgidus (strain ATCC 49558 / DSM 4304 / JCM 9628 / NBRC 100126 / VC-16), this protein is Small ribosomal subunit protein uS2 (rps2).